The primary structure comprises 177 residues: Putative HVA22-like protein g (177 aa).

Residues 145–165 (QSTPKSKAEEKKETTIPKLDD) are disordered. Residues 150–165 (SKAEEKKETTIPKLDD) are compositionally biased toward basic and acidic residues.

This sequence belongs to the DP1 family.

The chain is Putative HVA22-like protein g (HVA22G) from Arabidopsis thaliana (Mouse-ear cress).